We begin with the raw amino-acid sequence, 596 residues long: Chaperone protein DnaK (596 aa).

Phosphothreonine; by autocatalysis is present on T174. The tract at residues 576–596 is disordered; the sequence is ANATKDQSSKDQEEVATVVEE.

It belongs to the heat shock protein 70 family.

In terms of biological role, acts as a chaperone. The protein is Chaperone protein DnaK of Mycoplasmopsis synoviae (strain 53) (Mycoplasma synoviae).